The following is a 303-amino-acid chain: Protoheme IX farnesyltransferase (303 aa).

The next 8 helical transmembrane spans lie at 25–45 (MGLV…AIVL), 54–74 (IPQI…ACAL), 104–124 (LLIL…ILNI), 125–145 (PSGV…SIWS), 151–171 (WNTV…WTAI), 179–199 (AIAL…ALAI), 228–248 (VWLI…PVFI), and 280–300 (FVYS…ISLI).

It belongs to the UbiA prenyltransferase family. Protoheme IX farnesyltransferase subfamily. As to quaternary structure, interacts with CtaA.

It localises to the cell membrane. It carries out the reaction heme b + (2E,6E)-farnesyl diphosphate + H2O = Fe(II)-heme o + diphosphate. Its pathway is porphyrin-containing compound metabolism; heme O biosynthesis; heme O from protoheme: step 1/1. Converts heme B (protoheme IX) to heme O by substitution of the vinyl group on carbon 2 of heme B porphyrin ring with a hydroxyethyl farnesyl side group. The protein is Protoheme IX farnesyltransferase of Staphylococcus carnosus (strain TM300).